A 459-amino-acid polypeptide reads, in one-letter code: Protein FAM90A27P (459 aa).

A compositionally biased stretch (basic residues) spans 1-10 (MARHSVHHQA). Disordered stretches follow at residues 1-41 (MARH…ESRV), 74-136 (SHKE…WKEP), 153-239 (HTTK…ALQP), and 259-459 (PDAD…SDSD). The span at 125–136 (PQEKMQEAWKEP) shows a compositional bias: basic and acidic residues. Polar residues predominate over residues 184–194 (HNDSPQLSTCG). Residues 341 to 353 (KATAETAATKTAT) are compositionally biased toward low complexity. Over residues 415–427 (PPENSASAQSPRF) the composition is skewed to polar residues.

Belongs to the FAM90 family.

The chain is Protein FAM90A27P (FAM90A27P) from Homo sapiens (Human).